Consider the following 321-residue polypeptide: Transmembrane protein 255A (321 aa).

The next 4 membrane-spanning stretches (helical) occupy residues 29–49 (VFVT…GMAA), 56–76 (VTVG…LGII), 88–108 (LVAS…CAIV), and 200–220 (TILN…LGGF). Residues 279-297 (STPSGLSDDPNGQASSFMW) show a composition bias toward polar residues. The disordered stretch occupies residues 279 to 300 (STPSGLSDDPNGQASSFMWPSN).

This sequence belongs to the TMEM255 family.

It is found in the membrane. The polypeptide is Transmembrane protein 255A (tmem255a) (Xenopus laevis (African clawed frog)).